The primary structure comprises 367 residues: D-alanine--D-alanine ligase (367 aa).

The 208-residue stretch at 150 to 357 (KKLLASAGLP…YPTLLATMVE (208 aa)) folds into the ATP-grasp domain. Residue 178–233 (RERLGLPVFVKPSRGGSSIGVSRVTAWDELPAAIELARRHDPKVIIEAAVPGRELE) participates in ATP binding. The Mg(2+) site is built by aspartate 312, glutamate 324, and asparagine 326.

Belongs to the D-alanine--D-alanine ligase family. It depends on Mg(2+) as a cofactor. The cofactor is Mn(2+).

It is found in the cytoplasm. The enzyme catalyses 2 D-alanine + ATP = D-alanyl-D-alanine + ADP + phosphate + H(+). It participates in cell wall biogenesis; peptidoglycan biosynthesis. Functionally, cell wall formation. The chain is D-alanine--D-alanine ligase from Mycolicibacterium gilvum (strain PYR-GCK) (Mycobacterium gilvum (strain PYR-GCK)).